We begin with the raw amino-acid sequence, 232 residues long: Sugar fermentation stimulation protein homolog (232 aa).

The protein belongs to the SfsA family.

In Geobacter metallireducens (strain ATCC 53774 / DSM 7210 / GS-15), this protein is Sugar fermentation stimulation protein homolog.